Consider the following 783-residue polypeptide: Putative ATP-dependent DNA helicase fml2 (783 aa).

Positions 118–286 constitute a Helicase ATP-binding domain; that stretch reads FCEQALFHNL…KVVDCLHISK (169 aa). 131–138 is a binding site for ATP; that stretch reads LPTGLGKT. The short motif at 234–237 is the DEAH box element; that stretch reads DEAH. The Helicase C-terminal domain maps to 450 to 619; the sequence is KMNHLLELLK…GKKIALKKDV (170 aa).

This sequence belongs to the DEAD box helicase family. DEAH subfamily. FANCM sub-subfamily.

It is found in the nucleus. Its subcellular location is the nucleolus. The enzyme catalyses ATP + H2O = ADP + phosphate + H(+). The sequence is that of Putative ATP-dependent DNA helicase fml2 from Schizosaccharomyces pombe (strain 972 / ATCC 24843) (Fission yeast).